We begin with the raw amino-acid sequence, 309 residues long: Homoserine O-succinyltransferase (309 aa).

The Acyl-thioester intermediate role is filled by Cys-142. Substrate is bound by residues Lys-163 and Ser-192. Catalysis depends on His-235, which acts as the Proton acceptor. Glu-237 is a catalytic residue. Arg-249 contributes to the substrate binding site.

The protein belongs to the MetA family. Homodimer.

The protein localises to the cytoplasm. It carries out the reaction L-homoserine + succinyl-CoA = O-succinyl-L-homoserine + CoA. Its pathway is amino-acid biosynthesis; L-methionine biosynthesis via de novo pathway; O-succinyl-L-homoserine from L-homoserine: step 1/1. Its function is as follows. Transfers a succinyl group from succinyl-CoA to L-homoserine, forming succinyl-L-homoserine. This is Homoserine O-succinyltransferase from Escherichia coli (strain ATCC 8739 / DSM 1576 / NBRC 3972 / NCIMB 8545 / WDCM 00012 / Crooks).